A 460-amino-acid chain; its full sequence is Bifunctional protein GlmU (460 aa).

A pyrophosphorylase region spans residues M1 to R229. UDP-N-acetyl-alpha-D-glucosamine contacts are provided by residues L8–G11, K22, Q72, and G77–T78. D102 is a binding site for Mg(2+). UDP-N-acetyl-alpha-D-glucosamine-binding residues include G139, E154, N169, and N227. N227 is a Mg(2+) binding site. The tract at residues V230–N250 is linker. The interval G251–K460 is N-acetyltransferase. R332 and K350 together coordinate UDP-N-acetyl-alpha-D-glucosamine. Catalysis depends on H362, which acts as the Proton acceptor. Residues Y365 and N376 each contribute to the UDP-N-acetyl-alpha-D-glucosamine site. Acetyl-CoA is bound by residues A379, N385–Y386, S404, A422, and R439.

In the N-terminal section; belongs to the N-acetylglucosamine-1-phosphate uridyltransferase family. The protein in the C-terminal section; belongs to the transferase hexapeptide repeat family. In terms of assembly, homotrimer. Requires Mg(2+) as cofactor.

The protein resides in the cytoplasm. It carries out the reaction alpha-D-glucosamine 1-phosphate + acetyl-CoA = N-acetyl-alpha-D-glucosamine 1-phosphate + CoA + H(+). The catalysed reaction is N-acetyl-alpha-D-glucosamine 1-phosphate + UTP + H(+) = UDP-N-acetyl-alpha-D-glucosamine + diphosphate. The protein operates within nucleotide-sugar biosynthesis; UDP-N-acetyl-alpha-D-glucosamine biosynthesis; N-acetyl-alpha-D-glucosamine 1-phosphate from alpha-D-glucosamine 6-phosphate (route II): step 2/2. It participates in nucleotide-sugar biosynthesis; UDP-N-acetyl-alpha-D-glucosamine biosynthesis; UDP-N-acetyl-alpha-D-glucosamine from N-acetyl-alpha-D-glucosamine 1-phosphate: step 1/1. Its pathway is bacterial outer membrane biogenesis; LPS lipid A biosynthesis. Catalyzes the last two sequential reactions in the de novo biosynthetic pathway for UDP-N-acetylglucosamine (UDP-GlcNAc). The C-terminal domain catalyzes the transfer of acetyl group from acetyl coenzyme A to glucosamine-1-phosphate (GlcN-1-P) to produce N-acetylglucosamine-1-phosphate (GlcNAc-1-P), which is converted into UDP-GlcNAc by the transfer of uridine 5-monophosphate (from uridine 5-triphosphate), a reaction catalyzed by the N-terminal domain. The chain is Bifunctional protein GlmU from Streptococcus pyogenes serotype M28 (strain MGAS6180).